The primary structure comprises 358 residues: Glutamine synthetase (358 aa).

In terms of domain architecture, GS beta-grasp spans 25–104 (VQAEYIWIDA…VLCECYDNDG (80 aa)). Positions 111-358 (YRAHCKKVMD…ILVETTVLNN (248 aa)) constitute a GS catalytic domain.

Belongs to the glutamine synthetase family. Homooctamer.

The protein resides in the cytoplasm. It carries out the reaction L-glutamate + NH4(+) + ATP = L-glutamine + ADP + phosphate + H(+). In Cryptococcus neoformans var. neoformans serotype D (strain B-3501A) (Filobasidiella neoformans), this protein is Glutamine synthetase (GLN1).